A 480-amino-acid chain; its full sequence is tRNA (guanine(37)-N(1))-methyltransferase (480 aa).

A mitochondrion-targeting transit peptide spans 1–18 (MAAVWRRSARLFILLQRH). S-adenosyl-L-methionine contacts are provided by residues His273, 311–312 (DL), 339–340 (DG), and Asn367. Residues 458–480 (HTQDRDTSEEPCPKKQKCEDSTN) form a disordered region.

It belongs to the class I-like SAM-binding methyltransferase superfamily. TRM5/TYW2 family. Monomer.

It is found in the mitochondrion matrix. Its subcellular location is the nucleus. It localises to the cytoplasm. It carries out the reaction guanosine(37) in tRNA + S-adenosyl-L-methionine = N(1)-methylguanosine(37) in tRNA + S-adenosyl-L-homocysteine + H(+). In terms of biological role, involved in mitochondrial tRNA methylation. Specifically methylates the N1 position of guanosine-37 in various tRNAs. Methylation is not dependent on the nature of the nucleoside 5' of the target nucleoside. This is the first step in the biosynthesis of wybutosine (yW), a modified base adjacent to the anticodon of tRNAs and required for accurate decoding. The chain is tRNA (guanine(37)-N(1))-methyltransferase (trmt5) from Danio rerio (Zebrafish).